Here is a 294-residue protein sequence, read N- to C-terminus: MSKQPQQSLTLRSPAKLNLFLHIVGQRPDGYHLLQSVFQLIDWTDTVHLKRIPENEVRRINPIPDVSPEQDLVVRAAKLVKDFCKIDLGVEIDLKKEIPMGAGLGGGSSDAASTLIGLNTLWNLDLDKKTLSNLGLKLGADVPFFIFGQNAFVEGIGEQIQEISLENRDFLVIFPNRAIPTVSIFHDPELTRDHAPITIDGFLASPLSNQINDCQAVAMRICPEVKQALDWVSQALPGSAPRMSGSGSSVFAVLDPKTDSVKLENLLQSLPKGWIGRVVRGLNKNPAYNLISSD.

The active site involves lysine 16. ATP is bound at residue 99–109; the sequence is PMGAGLGGGSS. Residue aspartate 141 is part of the active site.

Belongs to the GHMP kinase family. IspE subfamily.

It catalyses the reaction 4-CDP-2-C-methyl-D-erythritol + ATP = 4-CDP-2-C-methyl-D-erythritol 2-phosphate + ADP + H(+). It participates in isoprenoid biosynthesis; isopentenyl diphosphate biosynthesis via DXP pathway; isopentenyl diphosphate from 1-deoxy-D-xylulose 5-phosphate: step 3/6. In terms of biological role, catalyzes the phosphorylation of the position 2 hydroxy group of 4-diphosphocytidyl-2C-methyl-D-erythritol. The protein is 4-diphosphocytidyl-2-C-methyl-D-erythritol kinase of Polynucleobacter asymbioticus (strain DSM 18221 / CIP 109841 / QLW-P1DMWA-1) (Polynucleobacter necessarius subsp. asymbioticus).